The primary structure comprises 95 residues: Co-chaperonin GroES (95 aa).

The protein belongs to the GroES chaperonin family. Heptamer of 7 subunits arranged in a ring. Interacts with the chaperonin GroEL.

The protein localises to the cytoplasm. Together with the chaperonin GroEL, plays an essential role in assisting protein folding. The GroEL-GroES system forms a nano-cage that allows encapsulation of the non-native substrate proteins and provides a physical environment optimized to promote and accelerate protein folding. GroES binds to the apical surface of the GroEL ring, thereby capping the opening of the GroEL channel. The protein is Co-chaperonin GroES of Rhizorhabdus wittichii (strain DSM 6014 / CCUG 31198 / JCM 15750 / NBRC 105917 / EY 4224 / RW1) (Sphingomonas wittichii).